The chain runs to 574 residues: K(+)/H(+) antiporter NhaP2 (574 aa).

13 helical membrane passes run 6 to 26 (INSF…LSPM), 34 to 54 (ILLI…GGIL), 58 to 78 (YSTA…DGGM), 87 to 107 (VALW…TSIT), 109 to 129 (VMAA…GAIV), 173 to 193 (IAIL…ISFI), 196 to 216 (FGLG…LVNV), 219 to 239 (LAEG…YATS), 242 to 262 (LGGS…NKPT), 271 to 291 (VLDG…GLLL), 299 to 319 (IWLP…PLAV), 335 to 355 (WFIS…VFPM), and 359 to 379 (LPGA…SLLV). The RCK C-terminal domain occupies 405-486 (SGVEIYPKSE…LEALSNLFSQ (82 aa)).

The protein belongs to the monovalent cation:proton antiporter 1 (CPA1) transporter (TC 2.A.36) family. NhaP2 subfamily.

It localises to the cell inner membrane. It catalyses the reaction K(+)(in) + H(+)(out) = K(+)(out) + H(+)(in). In terms of biological role, k(+)/H(+) antiporter that extrudes potassium in exchange for external protons and maintains the internal concentration of potassium under toxic levels. The protein is K(+)/H(+) antiporter NhaP2 of Shewanella oneidensis (strain ATCC 700550 / JCM 31522 / CIP 106686 / LMG 19005 / NCIMB 14063 / MR-1).